The chain runs to 643 residues: Phosphomethylpyrimidine synthase (643 aa).

Substrate-binding positions include Asn-248, Met-277, Tyr-306, His-342, Ser-362–Gly-364, Asp-403–Arg-406, and Glu-442. Residue His-446 participates in Zn(2+) binding. Residue Tyr-469 participates in substrate binding. A Zn(2+)-binding site is contributed by His-510. The [4Fe-4S] cluster site is built by Cys-590, Cys-593, and Cys-598.

Belongs to the ThiC family. In terms of assembly, homodimer. The cofactor is [4Fe-4S] cluster.

The enzyme catalyses 5-amino-1-(5-phospho-beta-D-ribosyl)imidazole + S-adenosyl-L-methionine = 4-amino-2-methyl-5-(phosphooxymethyl)pyrimidine + CO + 5'-deoxyadenosine + formate + L-methionine + 3 H(+). The protein operates within cofactor biosynthesis; thiamine diphosphate biosynthesis. Its function is as follows. Catalyzes the synthesis of the hydroxymethylpyrimidine phosphate (HMP-P) moiety of thiamine from aminoimidazole ribotide (AIR) in a radical S-adenosyl-L-methionine (SAM)-dependent reaction. The protein is Phosphomethylpyrimidine synthase of Burkholderia pseudomallei (strain 1106a).